The primary structure comprises 290 residues: Arginine and glutamate-rich protein 1 (290 aa).

Positions 1–10 are enriched in polar residues; the sequence is MGSRSRTPSP. Disordered stretches follow at residues 1 to 137, 193 to 216, and 249 to 290; these read MGSR…AKEL, ERRR…KREE, and MDEE…PGAL. Basic residues predominate over residues 12–28; it reads GKRRHHKSKHKKRSKSH. Basic and acidic residues-rich tracts occupy residues 29-44 and 53-76; these read HDHE…DKSS and RERD…DYRH. Ser-77 and Ser-79 each carry phosphoserine. The segment covering 88-99 has biased composition (low complexity); sequence SSSSSDSQYSEQ. Positions 111–269 form a coiled coil; sequence FKKLDEQNQM…QEKRVKEEQK (159 aa). Residues 124–137 show a composition bias toward basic and acidic residues; it reads RLAEMERQRRAKEL. Basic and acidic residues predominate over residues 249-269; sequence MDEERQRMRKEQEKRVKEEQK.

The protein belongs to the ARGLU1 family. In terms of assembly, associates with the U1-snRNP complex; the interaction is enhanced by binding of Arglu1 to a stable intronic sequence RNA (sisRNA) produced from the Arglu1 gene by premature cleavage.

Its subcellular location is the nucleus. It is found in the nucleus speckle. Post-transcriptional regulator of gene expression; modulates splicing and premature cleavage at cryptic polyadenylation sites of its own pre-mRNA through binding and regulation of the U1-snRNP complex. The protein is Arginine and glutamate-rich protein 1 of Drosophila melanogaster (Fruit fly).